The following is a 641-amino-acid chain: Anthrax toxin receptor-like (641 aa).

An N-terminal signal peptide occupies residues 1 to 27; sequence MMSHSPSMPCSALFLLLLLLLPPTFKG. The Extracellular segment spans residues 28 to 363; sequence GSLRYHGPGW…ASQGIVFKRT (336 aa). A VWFA domain is found at 76 to 247; the sequence is DLYLVLDKSG…SALEGVVDPL (172 aa). The a divalent metal cation site is built by Ser84, Ser86, and Thr150. Residues 364–384 traverse the membrane as a helical segment; it reads WLMFLPVLLVTLLLLCCTWKL. At 385–641 the chain is on the cytoplasmic side; the sequence is CIKPKKLPPP…FPPISKGPKF (257 aa). Residues 391–455 are disordered; sequence LPPPPPKPEK…ARPPPAPLPA (65 aa). Positions 407-436 are enriched in pro residues; that stretch reads PPPSSPPAPGRGPGPGPSAGPGPGPGPSPG.

This sequence belongs to the ATR family.

It localises to the membrane. The sequence is that of Anthrax toxin receptor-like (Antxrl) from Mus musculus (Mouse).